Here is a 543-residue protein sequence, read N- to C-terminus: CTP synthase (543 aa).

The interval 1-267 is amidoligase domain; the sequence is MAKFVFVTGG…CREVLDVLNL (267 aa). Position 13 (Ser-13) interacts with CTP. Ser-13 is a binding site for UTP. Residue 14 to 19 coordinates ATP; that stretch reads SIGKGI. Tyr-54 lines the L-glutamine pocket. An ATP-binding site is contributed by Asp-71. Mg(2+) is bound by residues Asp-71 and Glu-141. Residues 148-150, 188-193, and Lys-224 each bind CTP; these read DIE and KTKPTQ. UTP-binding positions include 188–193 and Lys-224; that span reads KTKPTQ. The 243-residue stretch at 292-534 folds into the Glutamine amidotransferase type-1 domain; the sequence is KVALVGKYVQ…IEAAQQRLPN (243 aa). Gly-354 provides a ligand contact to L-glutamine. Cys-381 functions as the Nucleophile; for glutamine hydrolysis in the catalytic mechanism. Residues 382–385, Glu-405, and Arg-462 each bind L-glutamine; that span reads LGMQ. Catalysis depends on residues His-507 and Glu-509.

This sequence belongs to the CTP synthase family. As to quaternary structure, homotetramer.

It carries out the reaction UTP + L-glutamine + ATP + H2O = CTP + L-glutamate + ADP + phosphate + 2 H(+). It catalyses the reaction L-glutamine + H2O = L-glutamate + NH4(+). The catalysed reaction is UTP + NH4(+) + ATP = CTP + ADP + phosphate + 2 H(+). Its pathway is pyrimidine metabolism; CTP biosynthesis via de novo pathway; CTP from UDP: step 2/2. With respect to regulation, allosterically activated by GTP, when glutamine is the substrate; GTP has no effect on the reaction when ammonia is the substrate. The allosteric effector GTP functions by stabilizing the protein conformation that binds the tetrahedral intermediate(s) formed during glutamine hydrolysis. Inhibited by the product CTP, via allosteric rather than competitive inhibition. Catalyzes the ATP-dependent amination of UTP to CTP with either L-glutamine or ammonia as the source of nitrogen. Regulates intracellular CTP levels through interactions with the four ribonucleotide triphosphates. The protein is CTP synthase of Synechococcus sp. (strain WH7803).